Consider the following 213-residue polypeptide: Dimethylamine corrinoid protein 1 (213 aa).

Positions 1–90 (MSKEELLQEL…LMPEGSASSK (90 aa)) constitute a B12-binding N-terminal domain. The B12-binding domain occupies 91–213 (MGVIVNGTVE…AVAKAKELLA (123 aa)). A methylcob(III)alamin-binding site is contributed by histidine 104.

The protein belongs to the methylamine corrinoid protein family.

Its pathway is one-carbon metabolism; methanogenesis from dimethylamine. Acts as a methyl group carrier between MtbB and MtbA. The polypeptide is Dimethylamine corrinoid protein 1 (mtbC1) (Methanosarcina acetivorans (strain ATCC 35395 / DSM 2834 / JCM 12185 / C2A)).